The sequence spans 191 residues: Dephospho-CoA kinase (191 aa).

In terms of domain architecture, DPCK spans 3-191 (AIGITGSYAS…KLIKDLECRV (189 aa)). Residue 11–16 (ASGKTF) participates in ATP binding.

This sequence belongs to the CoaE family.

It localises to the cytoplasm. The catalysed reaction is 3'-dephospho-CoA + ATP = ADP + CoA + H(+). Its pathway is cofactor biosynthesis; coenzyme A biosynthesis; CoA from (R)-pantothenate: step 5/5. Functionally, catalyzes the phosphorylation of the 3'-hydroxyl group of dephosphocoenzyme A to form coenzyme A. The polypeptide is Dephospho-CoA kinase (Rickettsia conorii (strain ATCC VR-613 / Malish 7)).